The chain runs to 250 residues: Deoxynucleoside-5'-monophosphate kinase (250 aa).

ATP contacts are provided by Gly14, Asp16, and Thr17. Positions 44, 65, 130, 137, 138, 150, 170, 172, 176, and 210 each coordinate dGMP.

Belongs to the dNMP kinase family. In terms of assembly, monomer.

The enzyme catalyses a 2'-deoxyribonucleoside 5'-phosphate + ATP = a 2'-deoxyribonucleoside 5'-diphosphate + ADP. Allows the synthesis of deoxyribonucleoside triphosphates necessary for the rapid viral DNA replication. Phosphorylates all four dNMPs. The enzyme had the highest activity with dAMP and had about 30% less activity with dTMP and dGMP, respectively. The lowest activity was observed with dCMP as the substrate (about 35% of that with dAMP). In Escherichia coli (Enterobacteria phage T5), this protein is Deoxynucleoside-5'-monophosphate kinase.